The following is a 245-amino-acid chain: 5-oxoprolinase subunit A (245 aa).

It belongs to the LamB/PxpA family. In terms of assembly, forms a complex composed of PxpA, PxpB and PxpC.

It catalyses the reaction 5-oxo-L-proline + ATP + 2 H2O = L-glutamate + ADP + phosphate + H(+). Catalyzes the cleavage of 5-oxoproline to form L-glutamate coupled to the hydrolysis of ATP to ADP and inorganic phosphate. The protein is 5-oxoprolinase subunit A of Erwinia tasmaniensis (strain DSM 17950 / CFBP 7177 / CIP 109463 / NCPPB 4357 / Et1/99).